We begin with the raw amino-acid sequence, 225 residues long: Cell division protein SepF (225 aa).

The tract at residues 21 to 134 (DEYLDEPEPT…GPLFDEGGPL (114 aa)) is disordered. Composition is skewed to basic and acidic residues over residues 28–54 (EPTRRPARPARDSGRDPYHDRDDRDFA), 77–86 (RYESPRHSSR), and 115–127 (TRSDRVESRRGPL).

This sequence belongs to the SepF family. As to quaternary structure, homodimer. Interacts with FtsZ.

Its subcellular location is the cytoplasm. Cell division protein that is part of the divisome complex and is recruited early to the Z-ring. Probably stimulates Z-ring formation, perhaps through the cross-linking of FtsZ protofilaments. Its function overlaps with FtsA. This chain is Cell division protein SepF, found in Rhodococcus opacus (strain B4).